The sequence spans 590 residues: MDKKGEIVFVNGPVVKADKMNGFIMNELVYVGKERLIGEIIELEGDLATIQVYEETTEMQPGEPVFSTGSPLSVELGPGIIGNIFDGIQRPLPVIAEKTGSFIKRGIEVNPLDRDREWTVSVKVKLGDRVKPGQVVAEVPETSIVTHRVMVPPHLSGEVVEVVPNGKYTVDQEIVTVKDDKGNNHQIRLHQKWPVRRPRPCGERLPIKKPLLTGQRVFDTFFPLGMGGTAAIPGGFGAGKTMTQHQLAKWSSADIIVYVGCGERGNEMTDVLEEFPKLEDPSTGKSMMERTVLIANTSNMPVAAREASIYTGITIAEFYRDMGYNVALMADSTSRWAEALREISGRLEEMPAEEGFPAYLPSRLAEFYERAGYVKTLGQDREGSISLIGAVSPPGGDFSEPVTQNTKRYVRCFWALDKSLASARHFPAVNWLESYSEYLEDLSGWLKENINEDWIKLRNMAMELLKEEDRLQEIVKLVGEDVLPDNQRLILEVARLIKIGFLQQNAFSKVDRFATPEKQYWMLKIIMFLYEKARPLIKNNIPISRVKNNELFSEVIKMKENIPNGDLDKFKDLMARIEEYYNRLWENYQE.

234–241 (GGFGAGKT) contacts ATP.

This sequence belongs to the ATPase alpha/beta chains family.

The enzyme catalyses ATP + H2O + 4 H(+)(in) = ADP + phosphate + 5 H(+)(out). In terms of biological role, produces ATP from ADP in the presence of a proton gradient across the membrane. The V-type alpha chain is a catalytic subunit. The protein is V-type ATP synthase alpha chain of Halothermothrix orenii (strain H 168 / OCM 544 / DSM 9562).